Consider the following 416-residue polypeptide: uncharacterized protein (416 aa).

Residues His29, Asp31, Glu144, His215, and His236 each coordinate Zn(2+).

It belongs to the metallo-dependent hydrolases superfamily. Peptidase M19 family. Zn(2+) is required as a cofactor.

It carries out the reaction an L-aminoacyl-L-amino acid + H2O = 2 an L-alpha-amino acid. This is an uncharacterized protein from Schizosaccharomyces pombe (strain 972 / ATCC 24843) (Fission yeast).